The following is a 180-amino-acid chain: Chromosome-anchoring protein RacA (180 aa).

Positions 5–25 (TPFIAKKLGVSPKAVVRIAQQ) form a DNA-binding region, H-T-H motif. Residues 90–150 (HDFEQLAAQL…KLEAGLKKEE (61 aa)) are a coiled coil.

Belongs to the RacA family.

It localises to the cytoplasm. Functionally, required for the formation of axial filaments and for anchoring the origin regions at the cell poles in sporulating cells, thus ensuring proper chromosome segregation in the prespore. Binds in a dispersed manner throughout the chromosome but preferentially to sites clustered in the origin portion of the chromosome, causing condensation of the chromosome and its remodeling into an elongated, anchored structure. This Bacillus anthracis (strain A0248) protein is Chromosome-anchoring protein RacA.